Consider the following 379-residue polypeptide: MIALHFGAGNIGRGFIGALLCKSGYDVVFADVNDAVINELNDKGRYTVEMADAGRKQETIGPVRAINSATQLDELYDLIAKADLVTTAVGPAVLKLIAEPIAEGLKRRMKINKQPLNIIACENMIGGSAHLREEIFARLTETERAAISDSVGFPNSAVDRIVPIQHHDDPLKVTVEPFFEWAVDQTEFAGKVPDIEGVTYVADLAPFIERKLFTVNTGHAMAAYAGYKKGLKTIKDAIHHPEVRQTVAGALEETGRYLVQTYDFTQEEHRAYMTKIIGRFENECLSDDVTRVARSPLRKLGRDDRLVGPARKLCDLGFEPVRLAEGIALALQFDCADDPEAVQLQSMIAEKGYAGVLRDVCGLEEDHSLFKLVISHLKA.

Residue 3 to 14 coordinates NAD(+); the sequence is ALHFGAGNIGRG.

The protein belongs to the mannitol dehydrogenase family.

The catalysed reaction is D-mannitol 1-phosphate + NAD(+) = beta-D-fructose 6-phosphate + NADH + H(+). The protein is Mannitol-1-phosphate 5-dehydrogenase of Bacillus licheniformis (strain ATCC 14580 / DSM 13 / JCM 2505 / CCUG 7422 / NBRC 12200 / NCIMB 9375 / NCTC 10341 / NRRL NRS-1264 / Gibson 46).